The chain runs to 590 residues: Asparagine synthetase [glutamine-hydrolyzing] (590 aa).

Cysteine 2 functions as the For GATase activity in the catalytic mechanism. The region spanning 2 to 185 (CGILAVLGCS…PGNLYSSRSG (184 aa)) is the Glutamine amidotransferase type-2 domain. L-glutamine contacts are provided by residues 50 to 54 (RLAII), 75 to 77 (NGE), and aspartate 98. The region spanning 193 to 516 (PQWYNETIPS…PQNSARFTVP (324 aa)) is the Asparagine synthetase domain. ATP is bound by residues leucine 231, valine 267, and 341 to 342 (SG).

It catalyses the reaction L-aspartate + L-glutamine + ATP + H2O = L-asparagine + L-glutamate + AMP + diphosphate + H(+). It functions in the pathway amino-acid biosynthesis; L-asparagine biosynthesis; L-asparagine from L-aspartate (L-Gln route): step 1/1. This is Asparagine synthetase [glutamine-hydrolyzing] from Asparagus officinalis (Garden asparagus).